The sequence spans 447 residues: Elongation factor 1-alpha (447 aa).

A tr-type G domain is found at 5–230 (KVHINIVVIG…DNINEPKRPS (226 aa)). Residues 14 to 21 (GHVDSGKS) form a G1 region. GTP is bound at residue 14-21 (GHVDSGKS). Lys55 is subject to N6,N6-dimethyllysine. Residues 70-74 (GITID) form a G2 region. Lys79 carries the post-translational modification N6,N6,N6-trimethyllysine. Residues 91-94 (DAPG) form a G3 region. Residues 91 to 95 (DAPGH) and 153 to 156 (NKMD) contribute to the GTP site. A G4 region spans residues 153-156 (NKMD). Lys187 carries the N6,N6,N6-trimethyllysine modification. The interval 194–196 (SGF) is G5. Position 261 is an N6-methyllysine (Lys261). A 5-glutamyl glycerylphosphorylethanolamine modification is found at Glu289. N6,N6,N6-trimethyllysine is present on Lys306. Residue Glu362 is modified to 5-glutamyl glycerylphosphorylethanolamine. Lys396 bears the N6,N6,N6-trimethyllysine mark.

It belongs to the TRAFAC class translation factor GTPase superfamily. Classic translation factor GTPase family. EF-Tu/EF-1A subfamily.

The protein resides in the cytoplasm. In terms of biological role, this protein promotes the GTP-dependent binding of aminoacyl-tRNA to the A-site of ribosomes during protein biosynthesis. In Vicia faba (Broad bean), this protein is Elongation factor 1-alpha.